We begin with the raw amino-acid sequence, 398 residues long: Phosphoglycerate kinase (398 aa).

Substrate is bound by residues 21 to 23, Arg36, 59 to 62, Arg119, and Arg157; these read DFN and HLGR. ATP-binding positions include Lys208, Gly296, Glu327, and 354-357; that span reads GGDS.

It belongs to the phosphoglycerate kinase family. As to quaternary structure, monomer.

Its subcellular location is the cytoplasm. The enzyme catalyses (2R)-3-phosphoglycerate + ATP = (2R)-3-phospho-glyceroyl phosphate + ADP. Its pathway is carbohydrate degradation; glycolysis; pyruvate from D-glyceraldehyde 3-phosphate: step 2/5. This is Phosphoglycerate kinase (pgk) from Lactococcus lactis subsp. lactis (strain IL1403) (Streptococcus lactis).